The primary structure comprises 529 residues: Peptide chain release factor 3 (529 aa).

One can recognise a tr-type G domain in the interval 11-280 (SKRRTFAIIS…GLTEWAPAPK (270 aa)). GTP-binding positions include 20–27 (SHPDAGKT), 88–92 (DTPGH), and 142–145 (NKLD).

This sequence belongs to the TRAFAC class translation factor GTPase superfamily. Classic translation factor GTPase family. PrfC subfamily.

It is found in the cytoplasm. Its function is as follows. Increases the formation of ribosomal termination complexes and stimulates activities of RF-1 and RF-2. It binds guanine nucleotides and has strong preference for UGA stop codons. It may interact directly with the ribosome. The stimulation of RF-1 and RF-2 is significantly reduced by GTP and GDP, but not by GMP. In Vibrio parahaemolyticus serotype O3:K6 (strain RIMD 2210633), this protein is Peptide chain release factor 3.